Consider the following 485-residue polypeptide: Proline--tRNA ligase (485 aa).

The protein belongs to the class-II aminoacyl-tRNA synthetase family. ProS type 3 subfamily. In terms of assembly, homodimer.

The protein localises to the cytoplasm. The enzyme catalyses tRNA(Pro) + L-proline + ATP = L-prolyl-tRNA(Pro) + AMP + diphosphate. Catalyzes the attachment of proline to tRNA(Pro) in a two-step reaction: proline is first activated by ATP to form Pro-AMP and then transferred to the acceptor end of tRNA(Pro). The protein is Proline--tRNA ligase of Aeropyrum pernix (strain ATCC 700893 / DSM 11879 / JCM 9820 / NBRC 100138 / K1).